A 195-amino-acid polypeptide reads, in one-letter code: Probable GTP-binding protein EngB (195 aa).

The EngB-type G domain maps to 22-195 (GRPEVALAGR…WAALLPFLTE (174 aa)). GTP is bound by residues 30–37 (GRSNVGKS), 57–61 (GKTQT), 75–78 (DVPG), 142–145 (TKAD), and 174–176 (FSS). Residues S37 and T59 each contribute to the Mg(2+) site.

Belongs to the TRAFAC class TrmE-Era-EngA-EngB-Septin-like GTPase superfamily. EngB GTPase family. Mg(2+) serves as cofactor.

In terms of biological role, necessary for normal cell division and for the maintenance of normal septation. The protein is Probable GTP-binding protein EngB of Geobacillus thermodenitrificans (strain NG80-2).